A 489-amino-acid polypeptide reads, in one-letter code: Actin-related protein 4 (489 aa).

The tract at residues 323–379 is disordered; it reads KRTKPSGVNKSDKKVTPTEEKEQEAVSKSTSPAANSADTPNETGKRPLEEEKPPKEN. Positions 332–347 are enriched in basic and acidic residues; sequence KSDKKVTPTEEKEQEA. Over residues 348–364 the composition is skewed to polar residues; the sequence is VSKSTSPAANSADTPNE. S349 carries the post-translational modification Phosphoserine. The span at 365-379 shows a compositional bias: basic and acidic residues; the sequence is TGKRPLEEEKPPKEN.

This sequence belongs to the actin family. ARP4 subfamily. In terms of assembly, component of the NuA4 histone acetyltransferase complex composed of at least ACT1, ARP4, EAF3, EAF5, EAF6, EAF7, EPL1, ESA1, SWC4, TRA1, VID21, YAF9 and YNG2. Component of the chromatin-remodeling INO80 complex, at least composed of ARP4, ARP5, ARP8, RVB1, RVB2, TAF14, NHP10, IES1, IES3, IES4, IES6, ACT1, IES2, IES5 and INO80. Component of the SWR1 chromatin remodeling complex composed of at least ACT1, ARP4, RVB1, RVB2, ARP6, YAF9, VPS71, VPS72, SWC3, SWC4, SWC5, SWC7 and SWR1, and perhaps BDF1. Interacts with histones H4 (HHF1 and HHF2), H3 (HHT1 and HHT2) and H2A (HTA1 and HTA2).

Its subcellular location is the nucleus. Its function is as follows. Chromatin interaction component of the NuA4 histone acetyltransferase complex which is involved in transcriptional activation of selected genes principally by acetylation of nucleosomal histone H4 and H2A. The NuA4 complex is also involved in DNA repair. ARP4 recognizes H2AS128ph (gamma-H2A) and is required for NuA4 complex integrity. Component of the SWR1 complex which mediates the ATP-dependent exchange of histone H2A for the H2A variant HZT1 leading to transcriptional regulation of selected genes by chromatin remodeling. Component of the INO80 complex which remodels chromatin by shifting nucleosomes. Its ability to induce transcription of some phosphate-responsive genes is modulated by inositol polyphosphates. The INO80 complex is involved in DNA repair by associating to gamma-H2A as a response to DNA damage. This is Actin-related protein 4 (ARP4) from Saccharomyces cerevisiae (strain ATCC 204508 / S288c) (Baker's yeast).